Here is a 464-residue protein sequence, read N- to C-terminus: Citrate synthase 5, mitochondrial (464 aa).

A mitochondrion-targeting transit peptide spans 1–25; that stretch reads MVFFRSVSAISRLRSRAVQQSSLSN. Active-site residues include H300, H346, and D401.

Belongs to the citrate synthase family.

It is found in the mitochondrion matrix. It carries out the reaction oxaloacetate + acetyl-CoA + H2O = citrate + CoA + H(+). It participates in carbohydrate metabolism; tricarboxylic acid cycle; isocitrate from oxaloacetate: step 1/2. This chain is Citrate synthase 5, mitochondrial (CSY5), found in Arabidopsis thaliana (Mouse-ear cress).